We begin with the raw amino-acid sequence, 425 residues long: Pleckstrin homology domain-containing family A member 2 (425 aa).

The PH 1 domain occupies 7–113 (QNRICGFLDI…WVEALNQASK (107 aa)). K141 is covalently cross-linked (Glycyl lysine isopeptide (Lys-Gly) (interchain with G-Cter in SUMO2)). S184 carries the phosphoserine modification. A PH 2 domain is found at 198–298 (PLIKSGYCVK…WIKEIGAAVQ (101 aa)). Residues S314 and S349 each carry the phosphoserine modification. The interval 374-410 (AEDSLFTPRLGESSTSAVLPSSRIRHRSEPQHPKEKP) is disordered. Residues 400 to 410 (RSEPQHPKEKP) are compositionally biased toward basic and acidic residues.

Binds MPDZ and PTPN13.

The protein localises to the cytoplasm. It is found in the cell membrane. Its subcellular location is the nucleus. In terms of biological role, binds specifically to phosphatidylinositol 3,4-diphosphate (PtdIns3,4P2), but not to other phosphoinositides. May recruit other proteins to the plasma membrane. The sequence is that of Pleckstrin homology domain-containing family A member 2 (PLEKHA2) from Bos taurus (Bovine).